The primary structure comprises 228 residues: MKISFHGQSCIKIITGDTTILVDPFISGNEKCDLKAEEQMPDFIVLSHGHDDHVGDTVEIAKNSGATVICNADLASFLAVEDGLENMAPMHIGGKRQFSFGQVKLTQAFHGSQTVRDGRIVNLGFPTGIVFTIEDKNIYFAGDTGLFSDMKLIGELNPLDVAFLPIGDNFTMGPEDAAIAARFLQAKLVVPMHYNTFPLIAQDPHKFVASLDEGITGKVLEIGESIEI.

This sequence belongs to the UPF0173 family.

This Listeria monocytogenes serotype 4a (strain HCC23) protein is UPF0173 metal-dependent hydrolase LMHCC_0991.